A 278-amino-acid polypeptide reads, in one-letter code: Sulfur carrier protein FdhD (278 aa).

The active-site Cysteine persulfide intermediate is cysteine 124.

Belongs to the FdhD family.

The protein resides in the cytoplasm. Required for formate dehydrogenase (FDH) activity. Acts as a sulfur carrier protein that transfers sulfur from IscS to the molybdenum cofactor prior to its insertion into FDH. In Burkholderia cenocepacia (strain ATCC BAA-245 / DSM 16553 / LMG 16656 / NCTC 13227 / J2315 / CF5610) (Burkholderia cepacia (strain J2315)), this protein is Sulfur carrier protein FdhD.